Consider the following 184-residue polypeptide: Large ribosomal subunit protein uL5 (184 aa).

Belongs to the universal ribosomal protein uL5 family. As to quaternary structure, part of the 50S ribosomal subunit; part of the 5S rRNA/L5/L18/L25 subcomplex. Contacts the 5S rRNA and the P site tRNA. Forms a bridge to the 30S subunit in the 70S ribosome.

Functionally, this is one of the proteins that bind and probably mediate the attachment of the 5S RNA into the large ribosomal subunit, where it forms part of the central protuberance. In the 70S ribosome it contacts protein S13 of the 30S subunit (bridge B1b), connecting the 2 subunits; this bridge is implicated in subunit movement. Contacts the P site tRNA; the 5S rRNA and some of its associated proteins might help stabilize positioning of ribosome-bound tRNAs. In Ureaplasma parvum serovar 3 (strain ATCC 27815 / 27 / NCTC 11736), this protein is Large ribosomal subunit protein uL5.